The sequence spans 275 residues: MPALRPALLWALLALWLCCATPAHALQCRDGYEPCVNEGMCVTYHNGTGYCKCPEGFLGEYCQHRDPCEKNRCQNGGTCVAQAMLGKATCRCASGFTGEDCQYSTSHPCFVSRPCLNGGTCHMLSRDTYECTCQVGFTGKECQWTDACLSHPCANGSTCTTVANQFSCKCLTGFTGQKCETDVNECDIPGHCQHGGICLNLPGSYQCQCLQGFTGQYCDSLYVPCAPSPCVNGGTCRQTGDFTFECNCLPETVRRGTELWERDREVWNGKEHDEN.

The N-terminal stretch at 1-25 (MPALRPALLWALLALWLCCATPAHA) is a signal peptide. EGF-like domains lie at 26–63 (LQCR…EYCQ), 64–102 (HRDP…EDCQ), 105–143 (TSHP…KECQ), and 144–180 (WTDA…QKCE). Disulfide bonds link Cys-28–Cys-41, Cys-35–Cys-51, Cys-53–Cys-62, Cys-68–Cys-79, Cys-73–Cys-90, Cys-92–Cys-101, Cys-109–Cys-121, Cys-115–Cys-131, Cys-133–Cys-142, Cys-148–Cys-159, Cys-153–Cys-168, Cys-170–Cys-179, Cys-186–Cys-198, Cys-192–Cys-207, Cys-209–Cys-218, Cys-225–Cys-236, and Cys-230–Cys-246. Residue Asn-46 is glycosylated (N-linked (GlcNAc...) asparagine). N-linked (GlcNAc...) asparagine glycosylation occurs at Asn-155. One can recognise an EGF-like 5; calcium-binding domain in the interval 182–219 (DVNECDIPGHCQHGGICLNLPGSYQCQCLQGFTGQYCD). The EGF-like 6 domain maps to 221–258 (LYVPCAPSPCVNGGTCRQTGDFTFECNCLPETVRRGTE).

The protein belongs to the NOTCH family. As to quaternary structure, interacts with NOTCH2. Interacts with DLL1; the interaction is direct. As to expression, expressed in radial glia neural stem cells during cortical development.

It localises to the secreted. Human-specific protein that promotes neural progenitor proliferation and evolutionary expansion of the brain neocortex by regulating the Notch signaling pathway. Able to promote neural progenitor self-renewal, possibly by down-regulating neuronal differentiation genes, thereby delaying the differentiation of neuronal progenitors and leading to an overall final increase in neuronal production. Acts by enhancing the Notch signaling pathway via two different mechanisms that probably work in parallel to reach the same effect. Enhances Notch signaling pathway in a non-cell-autonomous manner via direct interaction with NOTCH2. Also promotes Notch signaling pathway in a cell-autonomous manner through inhibition of cis DLL1-NOTCH2 interactions, which promotes neuronal differentiation. This is Notch homolog 2 N-terminal-like protein B from Homo sapiens (Human).